The primary structure comprises 302 residues: Light-independent protochlorophyllide reductase iron-sulfur ATP-binding protein (302 aa).

ATP contacts are provided by residues 46–51 (GIGKST) and lysine 75. Serine 50 contributes to the Mg(2+) binding site. [4Fe-4S] cluster contacts are provided by cysteine 131 and cysteine 165. 216–217 (NR) contacts ATP.

This sequence belongs to the NifH/BchL/ChlL family. Homodimer. Protochlorophyllide reductase is composed of three subunits; BchL, BchN and BchB. It depends on [4Fe-4S] cluster as a cofactor.

It carries out the reaction chlorophyllide a + oxidized 2[4Fe-4S]-[ferredoxin] + 2 ADP + 2 phosphate = protochlorophyllide a + reduced 2[4Fe-4S]-[ferredoxin] + 2 ATP + 2 H2O. Its pathway is porphyrin-containing compound metabolism; bacteriochlorophyll biosynthesis (light-independent). In terms of biological role, component of the dark-operative protochlorophyllide reductase (DPOR) that uses Mg-ATP and reduced ferredoxin to reduce ring D of protochlorophyllide (Pchlide) to form chlorophyllide a (Chlide). This reaction is light-independent. The L component serves as a unique electron donor to the NB-component of the complex, and binds Mg-ATP. The protein is Light-independent protochlorophyllide reductase iron-sulfur ATP-binding protein of Methylocella silvestris (strain DSM 15510 / CIP 108128 / LMG 27833 / NCIMB 13906 / BL2).